A 231-amino-acid chain; its full sequence is GDSL lipase Rv0518 (231 aa).

A signal peptide spans 1–20 (MSRPGTYVIGLTLLVGLVVG). The active-site Nucleophile is Ser46. Asp205 functions as the Proton donor in the catalytic mechanism. The active-site Proton acceptor is His208.

The protein belongs to the 'GDSL' lipolytic enzyme family.

It localises to the secreted. It is found in the cell wall. The protein resides in the extracellular space. It carries out the reaction a fatty acid ester + H2O = an aliphatic alcohol + a fatty acid + H(+). The enzyme catalyses decanoate ester + H2O = decanoate + an aliphatic alcohol + H(+). It catalyses the reaction an octanoate ester + H2O = an aliphatic alcohol + octanoate + H(+). The catalysed reaction is a dodecanoate ester + H2O = an aliphatic alcohol + dodecanoate + H(+). It carries out the reaction a tetradecanoate ester + H2O = an aliphatic alcohol + tetradecanoate + H(+). Activity is inhibited by the serine modifier phenylmethylsulfonyl fluoride (PMSF). Its function is as follows. GDSL lipase that catalyzes the hydrolysis of p-nitrophenyl (pNP) esters. pNP-decanoate (C10) is the preferred substrate. It can also use pNP-octanoate (C8), pNP-dodecanoate (C12) and pNP-tetradecanoate (C14). Has lower activity with pNP-butyrate (C4), pNP-palmitate (C16) and pNP-stearate (C18). Does not show phospholipase A1 activity. Might help bacteria to utilize available lipids for its growth as well as provide resistance to various intracellular stresses by cell wall modulation resulting in enhanced intracellular survival. This chain is GDSL lipase Rv0518, found in Mycobacterium tuberculosis (strain ATCC 25618 / H37Rv).